The sequence spans 1210 residues: Epidermal growth factor receptor (1210 aa).

Positions 1 to 24 are cleaved as a signal peptide; the sequence is MRPSGTAGAALLALLAALCPASRA. Topologically, residues 25–645 are extracellular; it reads LEEKKVCQGT…CARNGPKIPS (621 aa). Cys-31 and Cys-58 are oxidised to a cystine. One copy of the Approximate repeat lies at 75–300; the sequence is DLSFLKTIQE…CVKKCPRNYV (226 aa). N-linked (GlcNAc...) asparagine glycosylation is found at Asn-128, Asn-175, and Asn-196. Cystine bridges form between Cys-157–Cys-187, Cys-190–Cys-199, Cys-194–Cys-207, Cys-215–Cys-223, Cys-219–Cys-231, Cys-232–Cys-240, Cys-236–Cys-248, Cys-251–Cys-260, Cys-264–Cys-291, Cys-295–Cys-307, Cys-311–Cys-326, Cys-329–Cys-333, and Cys-337–Cys-362. Ser-229 bears the Phosphoserine mark. Residues Asn-352, Asn-361, Asn-413, and Asn-444 are each glycosylated (N-linked (GlcNAc...) asparagine). The stretch at 390–600 is one Approximate repeat; the sequence is QELDILKTVK…CVKTCPAGVM (211 aa). Cystine bridges form between Cys-470–Cys-499, Cys-506–Cys-515, Cys-510–Cys-523, Cys-526–Cys-535, Cys-539–Cys-555, Cys-558–Cys-571, Cys-562–Cys-579, Cys-582–Cys-591, Cys-595–Cys-617, Cys-620–Cys-628, and Cys-624–Cys-636. Asn-528 carries an N-linked (GlcNAc...) asparagine glycan. Asn-568 carries N-linked (GlcNAc...) asparagine glycosylation. N-linked (GlcNAc...) asparagine glycosylation is present at Asn-603. A helical transmembrane segment spans residues 646–668; that stretch reads IATGMVGALLLLLVVALGIGLFM. Topologically, residues 669-1210 are cytoplasmic; sequence RRRHIVRKRT…APQSSEFIGA (542 aa). Thr-678 is subject to Phosphothreonine; by PKC and PKD/PRKD1. Residues 688 to 704 are important for dimerization, phosphorylation and activation; it reads LVEPLTPSGEAPNQALL. Phosphothreonine; by PKD/PRKD1 is present on Thr-693. Residue Ser-695 is modified to Phosphoserine. The 268-residue stretch at 712 to 979 folds into the Protein kinase domain; sequence FKKIKVLGSG…KMARDPQRYL (268 aa). A Glycyl lysine isopeptide (Lys-Gly) (interchain with G-Cter in ubiquitin) cross-link involves residue Lys-716. Residue 718–726 participates in ATP binding; it reads LGSGAFGTV. Lys-737 is covalently cross-linked (Glycyl lysine isopeptide (Lys-Gly) (interchain with G-Cter in ubiquitin)). Lys-745 is a binding site for ATP. Lys-745 bears the N6-(2-hydroxyisobutyryl)lysine mark. Glycyl lysine isopeptide (Lys-Gly) (interchain with G-Cter in ubiquitin) cross-links involve residues Lys-754 and Lys-757. Residue 790-791 participates in ATP binding; sequence TQ. Asp-837 acts as the Proton acceptor in catalysis. Asp-855 contacts ATP. Lys-867 is covalently cross-linked (Glycyl lysine isopeptide (Lys-Gly) (interchain with G-Cter in ubiquitin)). Position 869 is a phosphotyrosine (Tyr-869). Residues Lys-929, Lys-960, and Lys-970 each participate in a glycyl lysine isopeptide (Lys-Gly) (interchain with G-Cter in ubiquitin) cross-link. Phosphoserine occurs at positions 991 and 995. A phosphotyrosine; by autocatalysis mark is found at Tyr-998 and Tyr-1016. Ser-1026 and Ser-1039 each carry phosphoserine. A Phosphothreonine modification is found at Thr-1041. Ser-1042 carries the phosphoserine modification. Cys-1049 is lipidated: S-palmitoyl cysteine. Ser-1064 is subject to Phosphoserine. At Tyr-1069 the chain carries Phosphotyrosine. A phosphoserine mark is found at Ser-1070, Ser-1071, and Ser-1081. Tyr-1092 and Tyr-1110 each carry phosphotyrosine; by autocatalysis. The interval 1097 to 1137 is disordered; it reads VPKRPAGSVQNPVYHNQPLNPAPSRDPHYQDPHSTAVGNPE. Composition is skewed to polar residues over residues 1104–1115 and 1128–1137; these read SVQNPVYHNQPL and PHSTAVGNPE. Cys-1146 is lipidated: S-palmitoyl cysteine. The residue at position 1166 (Ser-1166) is a Phosphoserine. Phosphotyrosine; by autocatalysis occurs at positions 1172 and 1197. Arg-1199 is subject to Omega-N-methylarginine.

The protein belongs to the protein kinase superfamily. Tyr protein kinase family. EGF receptor subfamily. As to quaternary structure, binding of the ligand triggers homo- and/or heterodimerization of the receptor triggering its autophosphorylation. Heterodimer with ERBB2. Forms a complex with CCDC88A/GIV (via SH2-like regions) and GNAI3 which leads to enhanced EGFR signaling and triggering of cell migration; binding to CCDC88A requires autophosphorylation of the EGFR C-terminal region, and ligand stimulation is required for recruitment of GNAI3 to the complex. Interacts with ERRFI1; inhibits dimerization of the kinase domain and autophosphorylation. Part of a complex with ERBB2 and either PIK3C2A or PIK3C2B. Interacts with GRB2; an adapter protein coupling the receptor to downstream signaling pathways. Interacts with GAB2; involved in signaling downstream of EGFR. Interacts with STAT3; mediates EGFR downstream signaling in cell proliferation. Interacts with RIPK1; involved in NF-kappa-B activation. Interacts (autophosphorylated) with CBL, CBLB and CBLC; involved in EGFR ubiquitination and regulation; interaction with CBL is reduced in the presence of tensin TNS4. Interacts with SOCS5; regulates EGFR degradation through ELOC- and ELOB-mediated ubiquitination and proteasomal degradation. Interacts with PRMT5; methylates EGFR and enhances interaction with PTPN6. Interacts (phosphorylated) with PTPN6; inhibits EGFR-dependent activation of MAPK/ERK. Interacts with COPG1; essential for regulation of EGF-dependent nuclear transport of EGFR by retrograde trafficking from the Golgi to the ER. Interacts with TNK2; this interaction is dependent on EGF stimulation and kinase activity of EGFR. Interacts with PCNA; positively regulates PCNA. Interacts with PELP1. Interacts with MUC1. Interacts with AP2M1. Interacts with FER. May interact with EPS8; mediates EPS8 phosphorylation. Interacts (via SH2 domains) with GRB2, NCK1 and NCK2. Interacts with ATXN2. Interacts with GAREM1. Interacts (ubiquitinated) with ANKRD13A/B/D; the interaction is direct and may regulate EGFR internalization after EGF stimulation. Interacts with GPER1; the interaction occurs in an estrogen-dependent manner. Interacts (via C-terminal cytoplasmic kinase domain) with ZPR1 (via zinc fingers). Interacts with RNF115 and RNF126. Interacts with GPRC5A (via its transmembrane domain). Interacts with FAM83B; positively regulates EGFR inducing its autophosphorylation in absence of stimulation by EGF. Interacts with LAPTM4B; positively correlates with EGFR activation. Interacts with STX19. Interacts with CD44. Interacts with PGRMC1; the interaction requires PGRMC1 homodimerization. Interacts with PIKFYVE. Interacts with NEU3. Interacts with TRAF4. Interacts with the ant venom OMEGA-myrmeciitoxin(02)-Mg1a. Interacts with CD82; this interaction facilitates ligand-induced endocytosis of the receptor and its subsequent desensitization. Post-translationally, phosphorylated on Tyr residues in response to EGF. Phosphorylation at Ser-695 is partial and occurs only if Thr-693 is phosphorylated. Phosphorylation at Thr-678 and Thr-693 by PRKD1 inhibits EGF-induced MAPK8/JNK1 activation. Dephosphorylation by PTPRJ prevents endocytosis and stabilizes the receptor at the plasma membrane. Autophosphorylation at Tyr-1197 is stimulated by methylation at Arg-1199 and enhances interaction with PTPN6. Autophosphorylation at Tyr-1092 and/or Tyr-1110 recruits STAT3. Dephosphorylated by PTPN1 and PTPN2. Monoubiquitinated and polyubiquitinated upon EGF stimulation; which does not affect tyrosine kinase activity or signaling capacity but may play a role in lysosomal targeting. Polyubiquitin linkage is mainly through 'Lys-63', but linkage through 'Lys-48', 'Lys-11' and 'Lys-29' also occurs. Deubiquitination by OTUD7B prevents degradation. Ubiquitinated by RNF115 and RNF126. Ubiquitinated by ZNRF1 or CBL at different lysines in response to EGF stimulation; leading to recruitment of the ESCRT machinery and subsequent degradation in the lysosomes. Deubiquitinated by UCHL1 leading to the inhibition of its degradation. In terms of processing, palmitoylated on Cys residues by ZDHHC20. Palmitoylation inhibits internalization after ligand binding, and increases the persistence of tyrosine-phosphorylated EGFR at the cell membrane. Palmitoylation increases the amplitude and duration of EGFR signaling. Post-translationally, methylated. Methylation at Arg-1199 by PRMT5 stimulates phosphorylation at Tyr-1197. In terms of tissue distribution, hypothalamus.

The protein localises to the cell membrane. It localises to the endoplasmic reticulum membrane. It is found in the golgi apparatus membrane. The protein resides in the nucleus membrane. Its subcellular location is the endosome. The protein localises to the endosome membrane. It localises to the nucleus. The enzyme catalyses L-tyrosyl-[protein] + ATP = O-phospho-L-tyrosyl-[protein] + ADP + H(+). With respect to regulation, endocytosis and inhibition of the activated EGFR by phosphatases like PTPRJ and PTPRK constitute immediate regulatory mechanisms. Upon EGF-binding phosphorylates EPS15 that regulates EGFR endocytosis and activity. Moreover, inducible feedback inhibitors including LRIG1, SOCS4, SOCS5 and ERRFI1 constitute alternative regulatory mechanisms for the EGFR signaling. Its function is as follows. Receptor tyrosine kinase binding ligands of the EGF family and activating several signaling cascades to convert extracellular cues into appropriate cellular responses. Known ligands include EGF, TGFA/TGF-alpha, AREG, epigen/EPGN, BTC/betacellulin, epiregulin/EREG and HBEGF/heparin-binding EGF. Ligand binding triggers receptor homo- and/or heterodimerization and autophosphorylation on key cytoplasmic residues. The phosphorylated receptor recruits adapter proteins like GRB2 which in turn activates complex downstream signaling cascades. Activates at least 4 major downstream signaling cascades including the RAS-RAF-MEK-ERK, PI3 kinase-AKT, PLCgamma-PKC and STATs modules. May also activate the NF-kappa-B signaling cascade. Also directly phosphorylates other proteins like RGS16, activating its GTPase activity and probably coupling the EGF receptor signaling to the G protein-coupled receptor signaling. Also phosphorylates MUC1 and increases its interaction with SRC and CTNNB1/beta-catenin. Positively regulates cell migration via interaction with CCDC88A/GIV which retains EGFR at the cell membrane following ligand stimulation, promoting EGFR signaling which triggers cell migration. Plays a role in enhancing learning and memory performance. Plays a role in mammalian pain signaling (long-lasting hypersensitivity). This chain is Epidermal growth factor receptor (EGFR), found in Macaca mulatta (Rhesus macaque).